The chain runs to 1138 residues: Trafficking protein particle complex subunit 9 (1138 aa).

Phosphoserine occurs at positions 557 and 944.

The protein belongs to the NIBP family. Component of the multisubunit TRAPP (transport protein particle) complex, which includes at least TRAPPC2, TRAPPC2L, TRAPPC3, TRAPPC3L, TRAPPC4, TRAPPC5, TRAPPC8, TRAPPC9, TRAPPC10, TRAPPC11 and TRAPPC12. Directly interacts with IKBKB and MAP3K14.

Its subcellular location is the golgi apparatus. The protein resides in the cis-Golgi network. The protein localises to the endoplasmic reticulum. It localises to the cytoplasm. Functions as an activator of NF-kappa-B through increased phosphorylation of the IKK complex. May function in neuronal cells differentiation. May play a role in vesicular transport from endoplasmic reticulum to Golgi. This is Trafficking protein particle complex subunit 9 (TRAPPC9) from Bos taurus (Bovine).